The following is a 21-amino-acid chain: Bombinin-H1/H3 (21 aa).

I2 is subject to D-allo-isoleucine; in form H3. I20 is modified (isoleucine amide).

This sequence belongs to the bombinin family. Expressed by the skin glands.

It is found in the secreted. Its function is as follows. Has antimicrobial and hemolytic activities. The chain is Bombinin-H1/H3 from Bombina variegata (Yellow-bellied toad).